The chain runs to 126 residues: Alpha-1-purothionin (126 aa).

The signal sequence occupies residues 1–16 (CLLILGLVLEQLQVEG). 4 disulfide bridges follow: C19–C55, C20–C47, C28–C45, and C32–C41. A propeptide spans 62–126 (LALESNSDEP…DAGLPSLDAY (65 aa)) (acidic domain).

Belongs to the plant thionin (TC 1.C.44) family. 4 C-C subfamily.

The protein localises to the secreted. Its function is as follows. Thionins are small plant proteins which are toxic to animal cells. They seem to exert their toxic effect at the level of the cell membrane. Their precise function is not known. The chain is Alpha-1-purothionin (THI1.1) from Triticum aestivum (Wheat).